A 323-amino-acid chain; its full sequence is tRNA U34 carboxymethyltransferase (323 aa).

Carboxy-S-adenosyl-L-methionine contacts are provided by residues lysine 91, tryptophan 105, lysine 110, glycine 130, 152–154 (DPT), 181–182 (IE), methionine 196, tyrosine 200, and arginine 315.

The protein belongs to the class I-like SAM-binding methyltransferase superfamily. CmoB family. As to quaternary structure, homotetramer.

It catalyses the reaction carboxy-S-adenosyl-L-methionine + 5-hydroxyuridine(34) in tRNA = 5-carboxymethoxyuridine(34) in tRNA + S-adenosyl-L-homocysteine + H(+). In terms of biological role, catalyzes carboxymethyl transfer from carboxy-S-adenosyl-L-methionine (Cx-SAM) to 5-hydroxyuridine (ho5U) to form 5-carboxymethoxyuridine (cmo5U) at position 34 in tRNAs. In Salmonella arizonae (strain ATCC BAA-731 / CDC346-86 / RSK2980), this protein is tRNA U34 carboxymethyltransferase.